A 189-amino-acid polypeptide reads, in one-letter code: Chitin synthase 2 (189 aa).

This sequence belongs to the chitin synthase family. Class II subfamily.

It localises to the cell membrane. The enzyme catalyses [(1-&gt;4)-N-acetyl-beta-D-glucosaminyl](n) + UDP-N-acetyl-alpha-D-glucosamine = [(1-&gt;4)-N-acetyl-beta-D-glucosaminyl](n+1) + UDP + H(+). Functionally, polymerizes chitin, a structural polymer of the cell wall and septum, by transferring the sugar moiety of UDP-GlcNAc to the non-reducing end of the growing chitin polymer. This Exophiala exophialae (Black yeast-like fungus) protein is Chitin synthase 2 (CHS2).